Reading from the N-terminus, the 101-residue chain is Small ribosomal subunit protein uS14 (101 aa).

The interval Ser-33 to Arg-69 is disordered. A compositionally biased stretch (basic and acidic residues) spans Leu-51–Gly-68.

The protein belongs to the universal ribosomal protein uS14 family. In terms of assembly, part of the 30S ribosomal subunit. Contacts proteins S3 and S10.

Binds 16S rRNA, required for the assembly of 30S particles and may also be responsible for determining the conformation of the 16S rRNA at the A site. In Xanthomonas axonopodis pv. citri (strain 306), this protein is Small ribosomal subunit protein uS14.